A 282-amino-acid chain; its full sequence is 4-hydroxybenzoate octaprenyltransferase (282 aa).

9 helical membrane-spanning segments follow: residues 17 to 37 (IGILLLWYPTAWALWMANQGF), 40 to 60 (IDLLMIFLLGTVFMRSAGCVI), 90 to 110 (AFILLFILLCASLLLLLKLPI), 113 to 133 (FYFAVISVLITFLYPFCKRFL), 135 to 155 (APQLILGLAFSMGIPMAFIAS), 163 to 183 (FIVLFLINFSWIIAYDTMYAM), 207 to 227 (LIIALLLIFLHSLWLVWAINK), 231 to 251 (WFFYLLWCTAAGILTYQLKLI), and 262 to 282 (AFLVSGYYGLVMWFAVGLALI).

The protein belongs to the UbiA prenyltransferase family. Mg(2+) is required as a cofactor.

It is found in the cell inner membrane. The catalysed reaction is all-trans-octaprenyl diphosphate + 4-hydroxybenzoate = 4-hydroxy-3-(all-trans-octaprenyl)benzoate + diphosphate. It functions in the pathway cofactor biosynthesis; ubiquinone biosynthesis. Functionally, catalyzes the prenylation of para-hydroxybenzoate (PHB) with an all-trans polyprenyl group. Mediates the second step in the final reaction sequence of ubiquinone-8 (UQ-8) biosynthesis, which is the condensation of the polyisoprenoid side chain with PHB, generating the first membrane-bound Q intermediate 3-octaprenyl-4-hydroxybenzoate. In Legionella pneumophila subsp. pneumophila (strain Philadelphia 1 / ATCC 33152 / DSM 7513), this protein is 4-hydroxybenzoate octaprenyltransferase.